A 458-amino-acid polypeptide reads, in one-letter code: ATP synthase subunit beta (458 aa).

148–155 (GGAGVGKT) serves as a coordination point for ATP.

The protein belongs to the ATPase alpha/beta chains family. In terms of assembly, F-type ATPases have 2 components, CF(1) - the catalytic core - and CF(0) - the membrane proton channel. CF(1) has five subunits: alpha(3), beta(3), gamma(1), delta(1), epsilon(1). CF(0) has three main subunits: a(1), b(2) and c(9-12). The alpha and beta chains form an alternating ring which encloses part of the gamma chain. CF(1) is attached to CF(0) by a central stalk formed by the gamma and epsilon chains, while a peripheral stalk is formed by the delta and b chains.

It is found in the cell inner membrane. The enzyme catalyses ATP + H2O + 4 H(+)(in) = ADP + phosphate + 5 H(+)(out). In terms of biological role, produces ATP from ADP in the presence of a proton gradient across the membrane. The catalytic sites are hosted primarily by the beta subunits. This Shewanella halifaxensis (strain HAW-EB4) protein is ATP synthase subunit beta.